The primary structure comprises 341 residues: Ketol-acid reductoisomerase (NADP(+)) (341 aa).

The KARI N-terminal Rossmann domain occupies 2-182; it reads AKIYYNDDAD…GGTRAGVIET (181 aa). Residues 25–28, serine 51, serine 53, and 83–86 each bind NADP(+); these read YGSQ and DQVQ. Histidine 108 is a catalytic residue. Glycine 134 lines the NADP(+) pocket. One can recognise a KARI C-terminal knotted domain in the interval 183-328; sequence TFTEETESDL…RKLRSLFAWE (146 aa). Residues aspartate 191, glutamate 195, glutamate 227, and glutamate 231 each coordinate Mg(2+). Position 252 (serine 252) interacts with substrate.

Belongs to the ketol-acid reductoisomerase family. Mg(2+) is required as a cofactor.

It catalyses the reaction (2R)-2,3-dihydroxy-3-methylbutanoate + NADP(+) = (2S)-2-acetolactate + NADPH + H(+). The enzyme catalyses (2R,3R)-2,3-dihydroxy-3-methylpentanoate + NADP(+) = (S)-2-ethyl-2-hydroxy-3-oxobutanoate + NADPH + H(+). Its pathway is amino-acid biosynthesis; L-isoleucine biosynthesis; L-isoleucine from 2-oxobutanoate: step 2/4. The protein operates within amino-acid biosynthesis; L-valine biosynthesis; L-valine from pyruvate: step 2/4. Its function is as follows. Involved in the biosynthesis of branched-chain amino acids (BCAA). Catalyzes an alkyl-migration followed by a ketol-acid reduction of (S)-2-acetolactate (S2AL) to yield (R)-2,3-dihydroxy-isovalerate. In the isomerase reaction, S2AL is rearranged via a Mg-dependent methyl migration to produce 3-hydroxy-3-methyl-2-ketobutyrate (HMKB). In the reductase reaction, this 2-ketoacid undergoes a metal-dependent reduction by NADPH to yield (R)-2,3-dihydroxy-isovalerate. In Kocuria rhizophila (strain ATCC 9341 / DSM 348 / NBRC 103217 / DC2201), this protein is Ketol-acid reductoisomerase (NADP(+)).